The sequence spans 177 residues: Large ribosomal subunit protein uL6 (177 aa).

This sequence belongs to the universal ribosomal protein uL6 family. As to quaternary structure, part of the 50S ribosomal subunit.

This protein binds to the 23S rRNA, and is important in its secondary structure. It is located near the subunit interface in the base of the L7/L12 stalk, and near the tRNA binding site of the peptidyltransferase center. This is Large ribosomal subunit protein uL6 from Agrobacterium fabrum (strain C58 / ATCC 33970) (Agrobacterium tumefaciens (strain C58)).